The chain runs to 485 residues: Glutamate--tRNA ligase 1 (485 aa).

The short motif at 9–19 (PSPTGHLHIGG) is the 'HIGH' region element. The 'KMSKS' region signature appears at 250–254 (KMSKR). Position 253 (K253) interacts with ATP.

This sequence belongs to the class-I aminoacyl-tRNA synthetase family. Glutamate--tRNA ligase type 1 subfamily. As to quaternary structure, monomer.

It is found in the cytoplasm. The catalysed reaction is tRNA(Glu) + L-glutamate + ATP = L-glutamyl-tRNA(Glu) + AMP + diphosphate. Functionally, catalyzes the attachment of glutamate to tRNA(Glu) in a two-step reaction: glutamate is first activated by ATP to form Glu-AMP and then transferred to the acceptor end of tRNA(Glu). The chain is Glutamate--tRNA ligase 1 from Caldicellulosiruptor saccharolyticus (strain ATCC 43494 / DSM 8903 / Tp8T 6331).